Reading from the N-terminus, the 138-residue chain is MARVTVEDCVLKIPNRFELVLVAGQRARDISAGSALTVDRDNDKNPVVSLREIADGTVDIPNLKEAVIQGLQKHVEIDEPEEDDFDAMGLDRDLMPGVALAEDDDTLEADGLTIHDGADSDLDLSDDAGQDTDEADED.

The tract at residues Ala101–Asp138 is disordered. Residues Asp119–Asp138 are compositionally biased toward acidic residues.

This sequence belongs to the RNA polymerase subunit omega family. The RNAP catalytic core consists of 2 alpha, 1 beta, 1 beta' and 1 omega subunit. When a sigma factor is associated with the core the holoenzyme is formed, which can initiate transcription.

It carries out the reaction RNA(n) + a ribonucleoside 5'-triphosphate = RNA(n+1) + diphosphate. Promotes RNA polymerase assembly. Latches the N- and C-terminal regions of the beta' subunit thereby facilitating its interaction with the beta and alpha subunits. This chain is DNA-directed RNA polymerase subunit omega, found in Rhodospirillum rubrum (strain ATCC 11170 / ATH 1.1.1 / DSM 467 / LMG 4362 / NCIMB 8255 / S1).